The sequence spans 116 residues: MSESLKNSQQFGNVYKNGKSFANKYLVMYVCKNELSINRLGISVSKKVGNSVVRHRISRLIRESYRLNDSISNSGLDIVIVARAGSKGKNYSEISSALMHLAKLHKIISSSEPDRN.

It belongs to the RnpA family. Consists of a catalytic RNA component (M1 or rnpB) and a protein subunit.

The catalysed reaction is Endonucleolytic cleavage of RNA, removing 5'-extranucleotides from tRNA precursor.. RNaseP catalyzes the removal of the 5'-leader sequence from pre-tRNA to produce the mature 5'-terminus. It can also cleave other RNA substrates such as 4.5S RNA. The protein component plays an auxiliary but essential role in vivo by binding to the 5'-leader sequence and broadening the substrate specificity of the ribozyme. The chain is Ribonuclease P protein component from Lachnoclostridium phytofermentans (strain ATCC 700394 / DSM 18823 / ISDg) (Clostridium phytofermentans).